Here is an 832-residue protein sequence, read N- to C-terminus: Valine--tRNA ligase (832 aa).

A 'HIGH' region motif is present at residues 41-51 (PNVTGKLHLGH). Residues 512–516 (KMSKS) carry the 'KMSKS' region motif. Residue Lys-515 participates in ATP binding. The stretch at 760 to 831 (FIEISQEQKQ…QIYLEELKWK (72 aa)) forms a coiled coil.

Belongs to the class-I aminoacyl-tRNA synthetase family. ValS type 1 subfamily. In terms of assembly, monomer.

It localises to the cytoplasm. The enzyme catalyses tRNA(Val) + L-valine + ATP = L-valyl-tRNA(Val) + AMP + diphosphate. Functionally, catalyzes the attachment of valine to tRNA(Val). As ValRS can inadvertently accommodate and process structurally similar amino acids such as threonine, to avoid such errors, it has a 'posttransfer' editing activity that hydrolyzes mischarged Thr-tRNA(Val) in a tRNA-dependent manner. This is Valine--tRNA ligase from Mycoplasmopsis synoviae (strain 53) (Mycoplasma synoviae).